Here is a 252-residue protein sequence, read N- to C-terminus: tRNA (guanine-N(1)-)-methyltransferase (252 aa).

S-adenosyl-L-methionine-binding positions include glycine 116 and 135–140 (LGDYVL).

This sequence belongs to the RNA methyltransferase TrmD family. Homodimer.

The protein resides in the cytoplasm. The enzyme catalyses guanosine(37) in tRNA + S-adenosyl-L-methionine = N(1)-methylguanosine(37) in tRNA + S-adenosyl-L-homocysteine + H(+). In terms of biological role, specifically methylates guanosine-37 in various tRNAs. The polypeptide is tRNA (guanine-N(1)-)-methyltransferase (Limosilactobacillus fermentum (strain NBRC 3956 / LMG 18251) (Lactobacillus fermentum)).